A 171-amino-acid polypeptide reads, in one-letter code: 3-hydroxydecanoyl-[acyl-carrier-protein] dehydratase (171 aa).

Residue histidine 70 is part of the active site.

This sequence belongs to the thioester dehydratase family. FabA subfamily. As to quaternary structure, homodimer.

It localises to the cytoplasm. The enzyme catalyses a (3R)-hydroxyacyl-[ACP] = a (2E)-enoyl-[ACP] + H2O. It carries out the reaction (3R)-hydroxydecanoyl-[ACP] = (2E)-decenoyl-[ACP] + H2O. The catalysed reaction is (2E)-decenoyl-[ACP] = (3Z)-decenoyl-[ACP]. Its pathway is lipid metabolism; fatty acid biosynthesis. Its function is as follows. Necessary for the introduction of cis unsaturation into fatty acids. Catalyzes the dehydration of (3R)-3-hydroxydecanoyl-ACP to E-(2)-decenoyl-ACP and then its isomerization to Z-(3)-decenoyl-ACP. Can catalyze the dehydratase reaction for beta-hydroxyacyl-ACPs with saturated chain lengths up to 16:0, being most active on intermediate chain length. This Shewanella sediminis (strain HAW-EB3) protein is 3-hydroxydecanoyl-[acyl-carrier-protein] dehydratase.